A 133-amino-acid chain; its full sequence is uncharacterized protein (133 aa).

This sequence belongs to the ycf68 family.

The protein resides in the plastid. The protein localises to the chloroplast. This is an uncharacterized protein from Oryza sativa subsp. japonica (Rice).